A 75-amino-acid polypeptide reads, in one-letter code: Signaling peptide TAXIMIN 1 (75 aa).

Residues 1–29 (MCDGDCRPLGFLLGLPFAFLSLLLSIIGV) form the signal peptide.

In terms of tissue distribution, expressed in shoot apical meristems (SAM); mostly specific to the L1 layer in the center of the meristem but also detected in the L2 layer in organ primordia. Also observed in the vasculature of seedling roots.

Its subcellular location is the secreted. Counteracted by the antibiotic cefotaxime during responses to light stress. In terms of biological role, signaling peptide involved in the regulation of lateral organs separation, including fruits and leaves. Involved in the perception of and response to light stress via the control of sinapoyl-malate accumulation, a UV-B protecting compound. The sequence is that of Signaling peptide TAXIMIN 1 from Arabidopsis thaliana (Mouse-ear cress).